Consider the following 141-residue polypeptide: Putative pre-16S rRNA nuclease (141 aa).

It belongs to the YqgF nuclease family.

It is found in the cytoplasm. Its function is as follows. Could be a nuclease involved in processing of the 5'-end of pre-16S rRNA. This is Putative pre-16S rRNA nuclease from Cupriavidus pinatubonensis (strain JMP 134 / LMG 1197) (Cupriavidus necator (strain JMP 134)).